Here is a 185-residue protein sequence, read N- to C-terminus: Ribosome-recycling factor (185 aa).

The protein belongs to the RRF family.

The protein resides in the cytoplasm. Responsible for the release of ribosomes from messenger RNA at the termination of protein biosynthesis. May increase the efficiency of translation by recycling ribosomes from one round of translation to another. The polypeptide is Ribosome-recycling factor (Geobacillus thermodenitrificans (strain NG80-2)).